Here is a 725-residue protein sequence, read N- to C-terminus: MDKEIIKQHKISDEEYQEILNILGREPNLLELGVISAMWSEHCSYKSSKKYLSGFPTKAPWVIQGPGENAGVIDIGKKMAAVFKVESHNHPSFIEPFAGAATGVGGILRDVFTMGARVVAGMNSLKFGNIHDEKIGKHQKYLVKGVVSGISHYGNCMGVPTIGGECAFDECFNGNILVNAFALGTCKIKDIFYAKAEGIGNPVIYVGSKTGRDGLGGAVMASDSFNESSKSLRPTVQIGDPFAEKLLMEACLELFKTDYIVGIQDMGAAGLTSSSFEMAGRSGSGMRLYLDKTPMREEGMTPYELMLSESQERMLICAKKGYEEKVIEIFNKWGLDAAIIGEVTDSGKMELFWHGELVGLIPIEPLSEKAPILDRPVARPKYLDEIKNYKFNLNISTQEAFEKLLANENVSNKAYIYEQFDSSVQTNTLKSDGALGANSIRIKENNCLLSMAIECNSRLNYVNPKIGAAAAVASVGRKIACSGAKPLAISDCLNYGNPQNPEVMWQFAQGCEGIKLACKELNTPVVSGNVSLYNETDGVSIFPSPTIACVGVNEKAENVLKSYFSKDTSAIYLLGESKGSFGGSLIAKILDKKVAGELEDIDFSAELKLWDFLLKANEAKILDCANSIGIGGIAITLAKMCAMANLGINAKTNFADKSFIFEESPTRVIVGVKDEEEFIKFVNEMGINFAKLGNLDEKDFILDDIKISLAKLQTIYFDKFNEYLG.

H42 is a catalytic residue. ATP is bound by residues Y45 and K84. E86 provides a ligand contact to Mg(2+). Residues 87–90 (SHNH) and R109 each bind substrate. The active-site Proton acceptor is H88. A Mg(2+)-binding site is contributed by D110. Residue Q237 coordinates substrate. D265 contacts Mg(2+). Residue 309–311 (ESQ) participates in substrate binding. ATP is bound by residues D491 and G528. N529 is a Mg(2+) binding site. S531 is a binding site for substrate.

The protein belongs to the FGAMS family. Monomer. Part of the FGAM synthase complex composed of 1 PurL, 1 PurQ and 2 PurS subunits.

Its subcellular location is the cytoplasm. The enzyme catalyses N(2)-formyl-N(1)-(5-phospho-beta-D-ribosyl)glycinamide + L-glutamine + ATP + H2O = 2-formamido-N(1)-(5-O-phospho-beta-D-ribosyl)acetamidine + L-glutamate + ADP + phosphate + H(+). The protein operates within purine metabolism; IMP biosynthesis via de novo pathway; 5-amino-1-(5-phospho-D-ribosyl)imidazole from N(2)-formyl-N(1)-(5-phospho-D-ribosyl)glycinamide: step 1/2. In terms of biological role, part of the phosphoribosylformylglycinamidine synthase complex involved in the purines biosynthetic pathway. Catalyzes the ATP-dependent conversion of formylglycinamide ribonucleotide (FGAR) and glutamine to yield formylglycinamidine ribonucleotide (FGAM) and glutamate. The FGAM synthase complex is composed of three subunits. PurQ produces an ammonia molecule by converting glutamine to glutamate. PurL transfers the ammonia molecule to FGAR to form FGAM in an ATP-dependent manner. PurS interacts with PurQ and PurL and is thought to assist in the transfer of the ammonia molecule from PurQ to PurL. The polypeptide is Phosphoribosylformylglycinamidine synthase subunit PurL (Campylobacter lari (strain RM2100 / D67 / ATCC BAA-1060)).